The following is a 152-amino-acid chain: Transcriptional regulator MraZ (152 aa).

2 consecutive SpoVT-AbrB domains span residues 5 to 52 (LNPI…THPQ) and 81 to 124 (ATEV…GKSQ).

It belongs to the MraZ family. In terms of assembly, forms oligomers.

The protein resides in the cytoplasm. Its subcellular location is the nucleoid. In Coxiella burnetii (strain Dugway 5J108-111), this protein is Transcriptional regulator MraZ.